The chain runs to 443 residues: Clustered-asparagine-rich protein (443 aa).

The region spanning 16 to 106 (TKLHIQNIPP…RNIDAKFAVP (91 aa)) is the RRM 1 domain. A disordered region spans residues 253–279 (NHLNNNNNNINNNNNNNNNNNNNNNVM). A compositionally biased stretch (low complexity) spans 256–277 (NNNNNNINNNNNNNNNNNNNNN). Residues 342–435 (SSITIMKKQN…KYLKVQLKKG (94 aa)) enclose the RRM 2 domain.

The chain is Clustered-asparagine-rich protein from Plasmodium falciparum.